A 60-amino-acid polypeptide reads, in one-letter code: UPF0434 protein YcaR (60 aa).

Belongs to the UPF0434 family.

This chain is UPF0434 protein YcaR, found in Escherichia coli O81 (strain ED1a).